Here is a 310-residue protein sequence, read N- to C-terminus: MEFKHKDIIALRDLSKEEIELLISTAENMREVNSRDIKKVPTLRGKTIINLFYESSTRTRTSFEIAGKRLSADTVNIAPSNSSATKGETLADTALNLLAMKPDIIVMRHAVSGSHYFLSKKVGCSIINAGDGAHEHPSQGLLDMLTIKDKFGRLDGLKVAMVGDITHSRVARSNIQGLTKMGSSIFLAGPPTMMPPGVEQLGNVTVCGTMKEAIQDADVVIMLRIQQERQGKTLMPNTREYSRYFGLNPENVKWAKPDAMVMHPGPINRGVEMSSYVVDGNQSHILKQVENGVAVRMAMLYHVCGGGNVE.

2 residues coordinate carbamoyl phosphate: R58 and T59. K86 serves as a coordination point for L-aspartate. Positions 108, 136, and 139 each coordinate carbamoyl phosphate. 2 residues coordinate L-aspartate: R169 and R224. Residues G265 and P266 each coordinate carbamoyl phosphate.

This sequence belongs to the aspartate/ornithine carbamoyltransferase superfamily. ATCase family. As to quaternary structure, heterododecamer (2C3:3R2) of six catalytic PyrB chains organized as two trimers (C3), and six regulatory PyrI chains organized as three dimers (R2).

The enzyme catalyses carbamoyl phosphate + L-aspartate = N-carbamoyl-L-aspartate + phosphate + H(+). It functions in the pathway pyrimidine metabolism; UMP biosynthesis via de novo pathway; (S)-dihydroorotate from bicarbonate: step 2/3. Its function is as follows. Catalyzes the condensation of carbamoyl phosphate and aspartate to form carbamoyl aspartate and inorganic phosphate, the committed step in the de novo pyrimidine nucleotide biosynthesis pathway. The sequence is that of Aspartate carbamoyltransferase catalytic subunit from Trichlorobacter lovleyi (strain ATCC BAA-1151 / DSM 17278 / SZ) (Geobacter lovleyi).